Here is a 343-residue protein sequence, read N- to C-terminus: Selenide, water dikinase (343 aa).

Selenocysteine 16 is a catalytic residue. A non-standard amino acid (selenocysteine) is located at residue selenocysteine 16. ATP is bound by residues lysine 19 and 46-48 (GAE). Aspartate 49 contributes to the Mg(2+) binding site. ATP-binding positions include aspartate 66, aspartate 89, and 137 to 139 (GHT). Aspartate 89 provides a ligand contact to Mg(2+). Residue aspartate 225 participates in Mg(2+) binding.

Belongs to the selenophosphate synthase 1 family. Class I subfamily. As to quaternary structure, homodimer. It depends on Mg(2+) as a cofactor.

The catalysed reaction is hydrogenselenide + ATP + H2O = selenophosphate + AMP + phosphate + 2 H(+). Functionally, synthesizes selenophosphate from selenide and ATP. The protein is Selenide, water dikinase of Geobacter sp. (strain M21).